The following is a 640-amino-acid chain: 1,4-alpha-glucan branching enzyme GlgB (640 aa).

Asp-318 functions as the Nucleophile in the catalytic mechanism. Glu-371 acts as the Proton donor in catalysis.

The protein belongs to the glycosyl hydrolase 13 family. GlgB subfamily. In terms of assembly, monomer.

It carries out the reaction Transfers a segment of a (1-&gt;4)-alpha-D-glucan chain to a primary hydroxy group in a similar glucan chain.. It functions in the pathway glycan biosynthesis; glycogen biosynthesis. Catalyzes the formation of the alpha-1,6-glucosidic linkages in glycogen by scission of a 1,4-alpha-linked oligosaccharide from growing alpha-1,4-glucan chains and the subsequent attachment of the oligosaccharide to the alpha-1,6 position. The chain is 1,4-alpha-glucan branching enzyme GlgB from Francisella tularensis subsp. mediasiatica (strain FSC147).